The sequence spans 476 residues: Lactate utilization protein B 1 (476 aa).

4Fe-4S ferredoxin-type domains follow at residues 301–331 (GTEF…GHAY) and 350–379 (YDEY…LHDL). Cys-310, Cys-313, Cys-316, Cys-320, Cys-363, Cys-366, and Cys-370 together coordinate [4Fe-4S] cluster.

Belongs to the LutB/YkgF family.

Functionally, is involved in L-lactate degradation and allows cells to grow with lactate as the sole carbon source. Has probably a role as an electron transporter during oxidation of L-lactate. The protein is Lactate utilization protein B 1 of Bacillus mycoides (strain KBAB4) (Bacillus weihenstephanensis).